A 269-amino-acid polypeptide reads, in one-letter code: 5'-nucleotidase SurE (269 aa).

4 residues coordinate a divalent metal cation: D11, D12, S43, and N101.

This sequence belongs to the SurE nucleotidase family. A divalent metal cation is required as a cofactor.

It localises to the cytoplasm. The enzyme catalyses a ribonucleoside 5'-phosphate + H2O = a ribonucleoside + phosphate. Functionally, nucleotidase that shows phosphatase activity on nucleoside 5'-monophosphates. This chain is 5'-nucleotidase SurE, found in Prochlorococcus marinus (strain AS9601).